A 396-amino-acid polypeptide reads, in one-letter code: Protein BOP3 (396 aa).

Disordered regions lie at residues 1–22, 98–126, 145–168, 203–239, 254–274, and 355–396; these read MSTF…NNVN, GVPA…ENLP, PTPM…GISH, VARR…KFTN, RDQQ…QQDL, and REGR…LNST. Polar residues-rich tracts occupy residues 111-124, 159-168, and 210-230; these read QPHN…SSEN, ASSSTGGISH, and GTKS…SRNL. The segment covering 355-369 has biased composition (basic and acidic residues); sequence REGRQVHDDLDDRTC. The segment covering 370–396 has biased composition (polar residues); the sequence is SESSSRNESPVRTITKDNSVGKILNST.

The protein localises to the cytoplasm. Its subcellular location is the nucleus. Involved in resistance to methylmercury. Overexpression suppresses a PAM1-SLV3 double null mutation. The protein is Protein BOP3 (BOP3) of Saccharomyces cerevisiae (strain ATCC 204508 / S288c) (Baker's yeast).